Consider the following 121-residue polypeptide: Protein MGF 110-14L (121 aa).

Residues M1–A17 form the signal peptide.

It belongs to the asfivirus MGF 110 family.

In African swine fever virus (isolate Portugal/Lis 57/1957) (ASFV), this protein is Protein MGF 110-14L.